The chain runs to 303 residues: Bifunctional protein FolD 2 (303 aa).

Residues 169–171, Ser-194, and Ile-235 each bind NADP(+); that span reads GRS.

It belongs to the tetrahydrofolate dehydrogenase/cyclohydrolase family. In terms of assembly, homodimer.

The enzyme catalyses (6R)-5,10-methylene-5,6,7,8-tetrahydrofolate + NADP(+) = (6R)-5,10-methenyltetrahydrofolate + NADPH. The catalysed reaction is (6R)-5,10-methenyltetrahydrofolate + H2O = (6R)-10-formyltetrahydrofolate + H(+). It participates in one-carbon metabolism; tetrahydrofolate interconversion. In terms of biological role, catalyzes the oxidation of 5,10-methylenetetrahydrofolate to 5,10-methenyltetrahydrofolate and then the hydrolysis of 5,10-methenyltetrahydrofolate to 10-formyltetrahydrofolate. The protein is Bifunctional protein FolD 2 of Pseudomonas putida (strain GB-1).